The primary structure comprises 77 residues: Small ribosomal subunit protein bS16 (77 aa).

Belongs to the bacterial ribosomal protein bS16 family.

This Wolinella succinogenes (strain ATCC 29543 / DSM 1740 / CCUG 13145 / JCM 31913 / LMG 7466 / NCTC 11488 / FDC 602W) (Vibrio succinogenes) protein is Small ribosomal subunit protein bS16.